The following is a 778-amino-acid chain: Molybdenum cofactor sulfurase (778 aa).

N6-(pyridoxal phosphate)lysine is present on Lys235. The active site involves Cys399. 2 disordered regions span residues 576–596 and 654–673; these read LSKNPSLFRSSSSRSRSSRVC and ARPALPGSFPPSPPDSDTEK. The span at 584-594 shows a compositional bias: low complexity; the sequence is RSSSSRSRSSR. Residues 651–778 form the MOSC domain; the sequence is LPTARPALPG…ETAERARSRL (128 aa).

It belongs to the class-V pyridoxal-phosphate-dependent aminotransferase family. MOCOS subfamily. The cofactor is pyridoxal 5'-phosphate.

The catalysed reaction is Mo-molybdopterin + L-cysteine + AH2 = thio-Mo-molybdopterin + L-alanine + A + H2O. It functions in the pathway cofactor biosynthesis; molybdopterin biosynthesis. In terms of biological role, sulfurates the molybdenum cofactor. Sulfation of molybdenum is essential for xanthine dehydrogenase (XDH) and aldehyde oxidase (ADO) enzymes in which molybdenum cofactor is liganded by 1 oxygen and 1 sulfur atom in active form. The polypeptide is Molybdenum cofactor sulfurase (Chaetomium globosum (strain ATCC 6205 / CBS 148.51 / DSM 1962 / NBRC 6347 / NRRL 1970) (Soil fungus)).